A 172-amino-acid polypeptide reads, in one-letter code: Shikimate kinase (172 aa).

14-19 serves as a coordination point for ATP; sequence GAGKST. Ser18 lines the Mg(2+) pocket. Substrate contacts are provided by Asp36, Arg60, and Gly82. Residue Arg120 participates in ATP binding. Arg140 is a substrate binding site. Residue Gln157 participates in ATP binding.

Belongs to the shikimate kinase family. As to quaternary structure, monomer. It depends on Mg(2+) as a cofactor.

Its subcellular location is the cytoplasm. It carries out the reaction shikimate + ATP = 3-phosphoshikimate + ADP + H(+). It functions in the pathway metabolic intermediate biosynthesis; chorismate biosynthesis; chorismate from D-erythrose 4-phosphate and phosphoenolpyruvate: step 5/7. Functionally, catalyzes the specific phosphorylation of the 3-hydroxyl group of shikimic acid using ATP as a cosubstrate. The protein is Shikimate kinase of Colwellia psychrerythraea (strain 34H / ATCC BAA-681) (Vibrio psychroerythus).